Consider the following 101-residue polypeptide: Protein S100-A4 (101 aa).

At Ala-2 the chain carries N-acetylalanine. Lys-7 carries the N6-acetyllysine modification. 2 consecutive EF-hand domains span residues 12-47 (MVST…SFLG) and 50-85 (TDEA…IAMM). Ca(2+) is bound by residues Lys-28 and Glu-33. An N6-acetyllysine modification is found at Lys-35. Residues Asp-63, Asn-65, Asp-67, Glu-69, and Glu-74 each coordinate Ca(2+).

It belongs to the S-100 family. Homodimer. Interacts with PPFIBP1 in a calcium-dependent mode. Interacts with PGLYRP1; this complex acts as a chemoattractant that promotes lymphocyte movement. Interacts with MYH9; this interaction increases cell motility. Interacts with Annexin 2/ANXA2. Interacts with TP53; this interaction promotes TP53 degradation. Interacts with CCR5. Interacts with FCGR3A; this interaction inhibits PKC-dependent phosphorylation of FCGR3A. Ubiquitously expressed.

The protein resides in the secreted. It is found in the nucleus. The protein localises to the cytoplasm. Its function is as follows. Calcium-binding protein that plays a role in various cellular processes including motility, angiogenesis, cell differentiation, apoptosis, and autophagy. Increases cell motility and invasiveness by interacting with non-muscle myosin heavy chain (NMMHC) IIA/MYH9. Mechanistically, promotes filament depolymerization and increases the amount of soluble myosin-IIA, resulting in the formation of stable protrusions facilitating chemotaxis. Also modulates the pro-apoptotic function of TP53 by binding to its C-terminal transactivation domain within the nucleus and reducing its protein levels. Within the extracellular space, stimulates cytokine production including granulocyte colony-stimulating factor and CCL24 from T-lymphocytes. In addition, stimulates T-lymphocyte chemotaxis by acting as a chemoattractant complex with PGLYRP1 that promotes lymphocyte migration via CCR5 and CXCR3 receptors. This chain is Protein S100-A4 (S100A4), found in Homo sapiens (Human).